The following is a 214-amino-acid chain: Single-pass membrane and coiled-coil domain-containing protein 1 (214 aa).

The stretch at 5 to 40 forms a coiled coil; sequence TTTLISLKEAMKRVDNKLRALDTQFKELDVTKDNLT. Residues 59–81 form a helical membrane-spanning segment; sequence IWTAALALGFTSMELNIVYSYVI. The segment at 193–214 is disordered; the sequence is KQAQDPENSRAPLKELMPPVKD.

Its subcellular location is the membrane. This Mus musculus (Mouse) protein is Single-pass membrane and coiled-coil domain-containing protein 1 (Smco1).